Consider the following 197-residue polypeptide: Carnitine operon protein CaiE (197 aa).

The tract at residues 177–197 (TAPEANRPRLRGTTEVKPKGQ) is disordered. Over residues 188–197 (GTTEVKPKGQ) the composition is skewed to basic and acidic residues.

It belongs to the transferase hexapeptide repeat family.

It functions in the pathway amine and polyamine metabolism; carnitine metabolism. Its function is as follows. Overproduction of CaiE stimulates the activity of CaiB and CaiD. The protein is Carnitine operon protein CaiE of Proteus sp. (strain LE138).